The sequence spans 191 residues: NAD(P)H dehydrogenase (quinone) (191 aa).

The Flavodoxin-like domain occupies 4 to 184; that stretch reads ILVIFHSITG…VAKMLGKRVA (181 aa). Residues 10–15, 83–85, and 118–124 contribute to the FMN site; these read SITGNT, TRF, and SNEMPHG.

Belongs to the WrbA family. As to quaternary structure, homodimer and homotetramer; in equilibrium. FMN serves as cofactor.

The enzyme catalyses a quinone + NADH + H(+) = a quinol + NAD(+). The catalysed reaction is a quinone + NADPH + H(+) = a quinol + NADP(+). Its function is as follows. It seems to function in response to environmental stress when various electron transfer chains are affected or when the environment is highly oxidizing. It reduces quinones to the hydroquinone state to prevent interaction of the semiquinone with O2 and production of superoxide. It prefers NADH over NADPH. The polypeptide is NAD(P)H dehydrogenase (quinone) (Archaeoglobus fulgidus (strain ATCC 49558 / DSM 4304 / JCM 9628 / NBRC 100126 / VC-16)).